The chain runs to 358 residues: Phosphate acyltransferase (358 aa).

The disordered stretch occupies residues 336–358 (SAAGAAPASPETAPTPHPSTRAA).

Belongs to the PlsX family. In terms of assembly, homodimer. Probably interacts with PlsY.

Its subcellular location is the cytoplasm. It carries out the reaction a fatty acyl-[ACP] + phosphate = an acyl phosphate + holo-[ACP]. It participates in lipid metabolism; phospholipid metabolism. Catalyzes the reversible formation of acyl-phosphate (acyl-PO(4)) from acyl-[acyl-carrier-protein] (acyl-ACP). This enzyme utilizes acyl-ACP as fatty acyl donor, but not acyl-CoA. This chain is Phosphate acyltransferase, found in Cupriavidus pinatubonensis (strain JMP 134 / LMG 1197) (Cupriavidus necator (strain JMP 134)).